The sequence spans 393 residues: NAD(P)H-quinone oxidoreductase subunit H, chloroplastic (393 aa).

This sequence belongs to the complex I 49 kDa subunit family. NDH is composed of at least 16 different subunits, 5 of which are encoded in the nucleus.

It localises to the plastid. The protein localises to the chloroplast thylakoid membrane. The enzyme catalyses a plastoquinone + NADH + (n+1) H(+)(in) = a plastoquinol + NAD(+) + n H(+)(out). It carries out the reaction a plastoquinone + NADPH + (n+1) H(+)(in) = a plastoquinol + NADP(+) + n H(+)(out). Its function is as follows. NDH shuttles electrons from NAD(P)H:plastoquinone, via FMN and iron-sulfur (Fe-S) centers, to quinones in the photosynthetic chain and possibly in a chloroplast respiratory chain. The immediate electron acceptor for the enzyme in this species is believed to be plastoquinone. Couples the redox reaction to proton translocation, and thus conserves the redox energy in a proton gradient. The sequence is that of NAD(P)H-quinone oxidoreductase subunit H, chloroplastic from Trifolium subterraneum (Subterranean clover).